We begin with the raw amino-acid sequence, 247 residues long: ATP synthase subunit a, chloroplastic (247 aa).

The next 5 helical transmembrane spans lie at 38–58 (QVLI…VIAV), 95–115 (VPFI…GALL), 134–154 (INTT…AGLS), 199–219 (LVVV…VMFL), and 220–240 (GLFT…AYIG).

This sequence belongs to the ATPase A chain family. As to quaternary structure, F-type ATPases have 2 components, CF(1) - the catalytic core - and CF(0) - the membrane proton channel. CF(1) has five subunits: alpha(3), beta(3), gamma(1), delta(1), epsilon(1). CF(0) has four main subunits: a, b, b' and c.

The protein resides in the plastid. The protein localises to the chloroplast thylakoid membrane. Key component of the proton channel; it plays a direct role in the translocation of protons across the membrane. The sequence is that of ATP synthase subunit a, chloroplastic from Lolium perenne (Perennial ryegrass).